We begin with the raw amino-acid sequence, 214 residues long: Dephospho-CoA kinase (214 aa).

Positions 3 to 202 (KIGLTGGIGS…DRWLALAGAA (200 aa)) constitute a DPCK domain. ATP is bound at residue 11–16 (GSGKSR).

It belongs to the CoaE family.

It localises to the cytoplasm. The enzyme catalyses 3'-dephospho-CoA + ATP = ADP + CoA + H(+). Its pathway is cofactor biosynthesis; coenzyme A biosynthesis; CoA from (R)-pantothenate: step 5/5. In terms of biological role, catalyzes the phosphorylation of the 3'-hydroxyl group of dephosphocoenzyme A to form coenzyme A. The sequence is that of Dephospho-CoA kinase from Bordetella bronchiseptica (strain ATCC BAA-588 / NCTC 13252 / RB50) (Alcaligenes bronchisepticus).